The sequence spans 335 residues: Protein-arginine kinase (335 aa).

In terms of domain architecture, Phosphagen kinase C-terminal spans 21–244; the sequence is IVMSSRIRLA…NQIIHEEKQI (224 aa). Residues 24 to 28, H82, R115, 166 to 170, and 197 to 202 each bind ATP; these read SSRIR, RASVM, and RGIYGE.

The protein belongs to the ATP:guanido phosphotransferase family.

It carries out the reaction L-arginyl-[protein] + ATP = N(omega)-phospho-L-arginyl-[protein] + ADP + H(+). Functionally, catalyzes the specific phosphorylation of arginine residues in proteins. This Staphylococcus aureus (strain USA300) protein is Protein-arginine kinase.